The primary structure comprises 39 residues: Cytochrome b559 subunit beta (39 aa).

The chain crosses the membrane as a helical span at residues 14–30 (WLAVHGLAVPTVFFLGS). Histidine 18 provides a ligand contact to heme.

Belongs to the PsbE/PsbF family. As to quaternary structure, heterodimer of an alpha subunit and a beta subunit. PSII is composed of 1 copy each of membrane proteins PsbA, PsbB, PsbC, PsbD, PsbE, PsbF, PsbH, PsbI, PsbJ, PsbK, PsbL, PsbM, PsbT, PsbX, PsbY, PsbZ, Psb30/Ycf12, at least 3 peripheral proteins of the oxygen-evolving complex and a large number of cofactors. It forms dimeric complexes. It depends on heme b as a cofactor.

The protein localises to the plastid. It is found in the chloroplast thylakoid membrane. Functionally, this b-type cytochrome is tightly associated with the reaction center of photosystem II (PSII). PSII is a light-driven water:plastoquinone oxidoreductase that uses light energy to abstract electrons from H(2)O, generating O(2) and a proton gradient subsequently used for ATP formation. It consists of a core antenna complex that captures photons, and an electron transfer chain that converts photonic excitation into a charge separation. The polypeptide is Cytochrome b559 subunit beta (Nicotiana glutinosa (Tobacco)).